A 131-amino-acid chain; its full sequence is Large ribosomal subunit protein bL12c (131 aa).

Over residues 106 to 125 (KDNTNKENSEEIKQQLEEAG) the composition is skewed to basic and acidic residues. The disordered stretch occupies residues 106-131 (KDNTNKENSEEIKQQLEEAGAKVSIK).

Belongs to the bacterial ribosomal protein bL12 family. As to quaternary structure, homodimer. Part of the ribosomal stalk of the 50S ribosomal subunit. Forms a multimeric L10(L12)X complex, where L10 forms an elongated spine to which 2 to 4 L12 dimers bind in a sequential fashion. Binds GTP-bound translation factors.

Its subcellular location is the plastid. It is found in the chloroplast. Forms part of the ribosomal stalk which helps the ribosome interact with GTP-bound translation factors. Is thus essential for accurate translation. This is Large ribosomal subunit protein bL12c from Gracilaria tenuistipitata var. liui (Red alga).